The chain runs to 556 residues: MSSYGYDPFFPSYKRRYADSPRLHVSAMRSGGYSSARSAYSSLSAPVSSVSVRRSYATSSASGSLLHSVDSLDLSQVAAISNDLKSIRSQERAQLQDLNDRFACFIERVHELEQQNKVLEAELLVLRQKHAEPSRFRALYEQEIRELRLAAEEATSEKQALQGERESLEETLRGLQARYEEEVLSREDAEARLLEVRKGADEAGLARAELEKRVDSLLDELAFLKKVHEEELAELQAQIQYAHLSVEMDVSAKPDLSAALRDIRAQYEKLAARNMQNAEEWFRSRFTVLSESAAKNTDAVRAAKDEVSESRRLLKAKTLEIEATRGMNEALEKQLQELEEKQSADISALQDTINKLENELRTTKSEMARYLKEYQDLLNVKMALDIEIAAYRKLLEGEETRLSFTSVGSITSGYTQTAPTFGRSAYSGLQSTSYLMTTRSFPTYYSSHVQEEQIEIEETIEAAKAGEAKAAPAEEGEEEEKEEGEEEEAGGEEAEEEEEGAKEESEEGKEGEEEEGEETAAEDGEESQETAEETGEEEKEEKEAAGKEETEVKKKA.

The residue at position 2 (S2) is an N-acetylserine. The segment at 2–94 is head; that stretch reads SSYGYDPFFP…KSIRSQERAQ (93 aa). The region spanning 91–402 is the IF rod domain; that stretch reads ERAQLQDLND…KLLEGEETRL (312 aa). Residues 95–126 form a coil 1A region; it reads LQDLNDRFACFIERVHELEQQNKVLEAELLVL. Residues 127–139 are linker 1; it reads RQKHAEPSRFRAL. The coil 1B stretch occupies residues 140–235; sequence YEQEIRELRL…KVHEEELAEL (96 aa). The linker 12 stretch occupies residues 236–254; that stretch reads QAQIQYAHLSVEMDVSAKP. Residues 255-273 form a coil 2A region; it reads DLSAALRDIRAQYEKLAAR. The segment at 274–282 is linker 2; it reads NMQNAEEWF. Positions 283 to 398 are coil 2B; the sequence is RSRFTVLSES…AAYRKLLEGE (116 aa). The segment at 399 to 445 is tail, subdomain A; it reads ETRLSFTSVGSITSGYTQTAPTFGRSAYSGLQSTSYLMTTRSFPTYY. The segment at 399–556 is tail; it reads ETRLSFTSVG…KEETEVKKKA (158 aa). A tail, subdomain B (acidic) region spans residues 446–556; that stretch reads SSHVQEEQIE…KEETEVKKKA (111 aa). Residues 464–473 are compositionally biased toward low complexity; the sequence is KAGEAKAAPA. Residues 464–556 are disordered; the sequence is KAGEAKAAPA…KEETEVKKKA (93 aa). Over residues 474 to 540 the composition is skewed to acidic residues; it reads EEGEEEEKEE…AEETGEEEKE (67 aa). Positions 541-556 are enriched in basic and acidic residues; that stretch reads EKEAAGKEETEVKKKA.

Belongs to the intermediate filament family. In terms of assembly, forms homodimers (in vitro).

Its subcellular location is the cell projection. It is found in the axon. The protein localises to the cytoplasm. The protein resides in the cytoskeleton. Its function is as follows. Neurofilaments usually contain three intermediate filament proteins: NEFL, NEFM, and NEFH which are involved in the maintenance of neuronal caliber. May additionally cooperate with the neuronal intermediate filament proteins to form neuronal filamentous networks. This Coturnix japonica (Japanese quail) protein is Neurofilament light polypeptide (NEFL).